Consider the following 274-residue polypeptide: Thiamine kinase (274 aa).

This sequence belongs to the thiamine kinase family.

The enzyme catalyses thiamine + ATP = thiamine phosphate + ADP + H(+). It participates in cofactor biosynthesis; thiamine diphosphate biosynthesis; thiamine phosphate from thiamine: step 1/1. In terms of biological role, catalyzes the ATP-dependent phosphorylation of thiamine to thiamine phosphate. Is involved in thiamine salvage. The sequence is that of Thiamine kinase from Shigella flexneri serotype 5b (strain 8401).